Reading from the N-terminus, the 102-residue chain is UPF0473 protein SERP1179 (102 aa).

The protein belongs to the UPF0473 family.

In Staphylococcus epidermidis (strain ATCC 35984 / DSM 28319 / BCRC 17069 / CCUG 31568 / BM 3577 / RP62A), this protein is UPF0473 protein SERP1179.